Here is a 373-residue protein sequence, read N- to C-terminus: Zn(2)-C6 fungal-type transcription factor afumD (373 aa).

The disordered stretch occupies residues 1–48 (MLDRSKMTSAIPDSNSSSSPRGHNQSERDSYNRKKRKGPRLAHRKSRT). Residues 33-48 (RKKRKGPRLAHRKSRT) show a composition bias toward basic residues. The zn(2)-C6 fungal-type DNA-binding region spans 50–77 (CQRCRARRVKCDESRPVCRDCHRHGIPC). The segment at 86–110 (GAIPPSTGIQSRPLEPSPSDPSNDA) is disordered.

It is found in the nucleus. Zn(2)-C6 fungal-type transcription factor; part of the gene cluster that mediates the biosynthesis fumihopaside A, a hopane-type glucoside that enhances the thermotolerance and UV resistance of N.fumigata. The polypeptide is Zn(2)-C6 fungal-type transcription factor afumD (Aspergillus fumigatus (strain CBS 144.89 / FGSC A1163 / CEA10) (Neosartorya fumigata)).